We begin with the raw amino-acid sequence, 181 residues long: Translation initiation factor IF-3 (181 aa).

This sequence belongs to the IF-3 family. Monomer.

It localises to the cytoplasm. Its function is as follows. IF-3 binds to the 30S ribosomal subunit and shifts the equilibrium between 70S ribosomes and their 50S and 30S subunits in favor of the free subunits, thus enhancing the availability of 30S subunits on which protein synthesis initiation begins. The polypeptide is Translation initiation factor IF-3 (Pseudoalteromonas translucida (strain TAC 125)).